We begin with the raw amino-acid sequence, 126 residues long: Fluoride-specific ion channel FluC (126 aa).

The next 2 membrane-spanning stretches (helical) occupy residues 2–22 (IKSL…RWLL) and 36–56 (GTLV…AYFL). Gly75 and Ser78 together coordinate Na(+). The next 2 helical transmembrane spans lie at 80–100 (FSTF…IWAL) and 105–125 (VHVI…TILF).

The protein belongs to the fluoride channel Fluc/FEX (TC 1.A.43) family. In terms of assembly, homodimer.

It is found in the cell inner membrane. The enzyme catalyses fluoride(in) = fluoride(out). Na(+) is not transported, but it plays an essential structural role and its presence is essential for fluoride channel function. In terms of biological role, fluoride-specific ion channel. Important for reducing fluoride concentration in the cell, thus reducing its toxicity. Is highly specific for fluoride ions and cannot transport chloride ions. The sequence is that of Fluoride-specific ion channel FluC from Escherichia coli O1:K1 / APEC.